Consider the following 584-residue polypeptide: Proline--tRNA ligase (584 aa).

The interval Ala-242–Asp-261 is disordered.

This sequence belongs to the class-II aminoacyl-tRNA synthetase family. ProS type 1 subfamily. Homodimer.

Its subcellular location is the cytoplasm. The enzyme catalyses tRNA(Pro) + L-proline + ATP = L-prolyl-tRNA(Pro) + AMP + diphosphate. Catalyzes the attachment of proline to tRNA(Pro) in a two-step reaction: proline is first activated by ATP to form Pro-AMP and then transferred to the acceptor end of tRNA(Pro). As ProRS can inadvertently accommodate and process non-cognate amino acids such as alanine and cysteine, to avoid such errors it has two additional distinct editing activities against alanine. One activity is designated as 'pretransfer' editing and involves the tRNA(Pro)-independent hydrolysis of activated Ala-AMP. The other activity is designated 'posttransfer' editing and involves deacylation of mischarged Ala-tRNA(Pro). The misacylated Cys-tRNA(Pro) is not edited by ProRS. The protein is Proline--tRNA ligase of Salinispora arenicola (strain CNS-205).